We begin with the raw amino-acid sequence, 331 residues long: Ferredoxin--NADP reductase (331 aa).

Residues E34, Q42, Y47, V87, F121, D285, and T325 each coordinate FAD.

Belongs to the ferredoxin--NADP reductase type 2 family. Homodimer. FAD is required as a cofactor.

The catalysed reaction is 2 reduced [2Fe-2S]-[ferredoxin] + NADP(+) + H(+) = 2 oxidized [2Fe-2S]-[ferredoxin] + NADPH. The sequence is that of Ferredoxin--NADP reductase from Lactiplantibacillus plantarum (strain ATCC BAA-793 / NCIMB 8826 / WCFS1) (Lactobacillus plantarum).